The chain runs to 285 residues: Energy-coupling factor transporter ATP-binding protein EcfA2 (285 aa).

Positions isoleucine 3–alanine 245 constitute an ABC transporter domain. ATP is bound at residue glycine 40–serine 47.

This sequence belongs to the ABC transporter superfamily. Energy-coupling factor EcfA family. As to quaternary structure, forms a stable energy-coupling factor (ECF) transporter complex composed of 2 membrane-embedded substrate-binding proteins (S component), 2 ATP-binding proteins (A component) and 2 transmembrane proteins (T component).

It localises to the cell membrane. In terms of biological role, ATP-binding (A) component of a common energy-coupling factor (ECF) ABC-transporter complex. Unlike classic ABC transporters this ECF transporter provides the energy necessary to transport a number of different substrates. The chain is Energy-coupling factor transporter ATP-binding protein EcfA2 from Clostridium perfringens (strain 13 / Type A).